Here is a 164-residue protein sequence, read N- to C-terminus: 3-isopropylmalate dehydratase small subunit 1 (164 aa).

It belongs to the LeuD family. LeuD type 2 subfamily. Heterodimer of LeuC and LeuD.

It catalyses the reaction (2R,3S)-3-isopropylmalate = (2S)-2-isopropylmalate. Its pathway is amino-acid biosynthesis; L-leucine biosynthesis; L-leucine from 3-methyl-2-oxobutanoate: step 2/4. Catalyzes the isomerization between 2-isopropylmalate and 3-isopropylmalate, via the formation of 2-isopropylmaleate. The sequence is that of 3-isopropylmalate dehydratase small subunit 1 (leuD1) from Pyrococcus furiosus (strain ATCC 43587 / DSM 3638 / JCM 8422 / Vc1).